Here is a 1182-residue protein sequence, read N- to C-terminus: IQ motif and SEC7 domain-containing protein 3 (1182 aa).

Residues 20–56 adopt a coiled-coil conformation; sequence AIVQNQQSLIHTQRERIDELERRLDELSAENRSLWEH. 2 disordered regions span residues 62 to 157 and 230 to 275; these read AQPP…ERPP and AAGR…RQQP. Residues 63-78 are compositionally biased toward pro residues; the sequence is QPPPGLVPPSSAPLPA. Composition is skewed to low complexity over residues 79–105 and 254–263; these read APAT…AAAP and GAGAASPRAG. At Ser259 the chain carries Phosphoserine. In terms of domain architecture, IQ spans 315–344; sequence SRRAACTIQTAFRQYQLSKNFEKIRNSLLE. Disordered stretches follow at residues 444–479 and 521–616; these read AGPP…AHSG and EPAA…ASAS. The span at 533-548 shows a compositional bias: basic and acidic residues; the sequence is SGREAPEAPAVGREDA. Residues 555–569 are compositionally biased toward low complexity; that stretch reads AEAAASGAADGATAP. Residues 572–581 are compositionally biased toward acidic residues; that stretch reads EEEEEEEETA. A compositionally biased stretch (low complexity) spans 598–616; that stretch reads SSSSTSTKSAKSGSEASAS. In terms of domain architecture, SEC7 spans 644–837; that stretch reads TLSTDTLRKR…VGIYERIQQK (194 aa). The region spanning 850–983 is the PH domain; the sequence is TKVEKSIVGM…LKESIAEVTE (134 aa). The stretch at 964–992 forms a coiled coil; the sequence is SDEMQKFVEDLKESIAEVTELEQIRIEWE. 2 disordered regions span residues 1002–1090 and 1121–1182; these read LSFK…PGTL and YTSS…RSLV. The span at 1022–1033 shows a compositional bias: basic and acidic residues; sequence AKREAALRERPA. Over residues 1043-1052 the composition is skewed to polar residues; the sequence is NRLQTSQHNS. Residues 1061–1087 are compositionally biased toward pro residues; that stretch reads PVPPPDLQPSPPRQQTPPLPPPPPTPP. Low complexity predominate over residues 1121 to 1132; sequence YTSSSSDSCGST. Residues 1147–1157 are compositionally biased toward pro residues; it reads PPLPPPPPPYN.

Belongs to the BRAG family. In terms of assembly, interacts with DLG1 and DLG4. Interacts with GPHN. In terms of tissue distribution, expressed specifically in the adult brain, predominantly in the cerebral cortex and the olfactory bulb, but not in the fetal brain. Expressed only in mature neurons, but not in undifferentiated neural stem precursor cells (NSPCs), nor in glioma cells.

The protein localises to the cytoplasm. It localises to the postsynaptic density. Functionally, acts as a guanine nucleotide exchange factor (GEF) for ARF1. This Homo sapiens (Human) protein is IQ motif and SEC7 domain-containing protein 3 (IQSEC3).